Here is a 169-residue protein sequence, read N- to C-terminus: Glycine-rich RNA-binding protein 8 (169 aa).

Positions 6–84 (YRCFVGGLAW…RVITVNEAQS (79 aa)) constitute an RRM domain. An ADP-ribosylarginine; by HopU1 modification is found at Arg-47. The interval 80–99 (NEAQSRGSGGGGGGRGGSGG) is disordered. The span at 86-99 (GSGGGGGGRGGSGG) shows a compositional bias: gly residues. The tract at residues 86 to 168 (GSGGGGGGRG…GGSYGGGGGG (83 aa)) is glycine-rich (GR) required for cell-to-cell movement. Positions 95–143 (GGSGGGYRSGGGGGYSGGGGGGYSGGGGGGYERRSGGYGSGGGGGGRGY) are nuclear targeting sequence (M9). Ser-103 bears the Phosphoserine mark. A disordered region spans residues 130–169 (GGYGSGGGGGGRGYGGGGRREGGGYGGGDGGSYGGGGGGW).

The protein belongs to the GR-RBP family. In terms of assembly, interacts with TRN1. Binds to small phloem-mobile single-stranded RNAs (ss-sRNA, e.g. small interfering RNA (siRNA) and microRNA (miRNA)) in the phloeme exudate, including viral-derived sRNA (vsiRNA). Post-translationally, ADP-ribosylated by the Pseudomonas syringae type III effector HopU1. ADP-ribosylation reduces the ability of the protein to bind RNA. As to expression, ubiquitous.

Its subcellular location is the cytoplasm. The protein resides in the nucleus. It localises to the secreted. Plays a role in RNA transcription or processing during stress. Binds RNAs and DNAs sequence with a preference to single-stranded nucleic acids. Involved in mRNA alternative splicing of numerous targets by modulating splice site selection. Negatively regulates the circadian oscillations of its own transcript as well as RBG7 transcript. Forms an interlocked post-transcriptional negative feedback loop with the RBG7 autoregulatory circuit. Both proteins negatively autoregulate and reciprocally crossregulate by binding to their pre-mRNAs and promoting unproductive splicing coupled to degradation via the NMD pathway. Target of the Pseudomonas syringae type III effector HopU1. Mediates cell-to-cell trafficking of RNA interference (RNAi) signals (small RNAs (sRNA), e.g. small interfering RNA (siRNA) and microRNA (miRNA)) which regulate growth and development, as well as responses to environmental inputs, including pathogen attack; can compromise zucchini yellow mosaic virus (ZYMV) and tobacco rattle virus (TRV) infections at the early stage. The chain is Glycine-rich RNA-binding protein 8 from Arabidopsis thaliana (Mouse-ear cress).